The chain runs to 279 residues: Elongation factor Ts (279 aa).

Residues 79 to 82 are involved in Mg(2+) ion dislocation from EF-Tu; the sequence is TDFV.

This sequence belongs to the EF-Ts family.

The protein resides in the cytoplasm. Its function is as follows. Associates with the EF-Tu.GDP complex and induces the exchange of GDP to GTP. It remains bound to the aminoacyl-tRNA.EF-Tu.GTP complex up to the GTP hydrolysis stage on the ribosome. The chain is Elongation factor Ts from Phytoplasma mali (strain AT).